Consider the following 747-residue polypeptide: 3',5'-cyclic-AMP phosphodiesterase 4D (747 aa).

A disordered region spans residues methionine 1 to aspartate 28. The segment covering serine 14 to asparagine 24 has biased composition (basic and acidic residues). Phosphoserine is present on residues serine 238, serine 240, serine 287, and serine 314. A disordered region spans residues glutamate 282–glutamine 302. The region spanning valine 325–serine 654 is the PDEase domain. Lysine 326 is covalently cross-linked (Glycyl lysine isopeptide (Lys-Gly) (interchain with G-Cter in SUMO)). Histidine 401 acts as the Proton donor in catalysis. Histidine 401 is a binding site for 3',5'-cyclic AMP. AMP is bound at residue histidine 401. Residues histidine 405, histidine 441, aspartate 442, and aspartate 559 each contribute to the Zn(2+) site. The AMP site is built by aspartate 442, aspartate 559, asparagine 562, glutamine 610, and phenylalanine 613. Aspartate 442 lines the Mg(2+) pocket. Residue aspartate 442 participates in Mn(2+) binding. 3',5'-cyclic AMP contacts are provided by glutamine 610 and phenylalanine 613. The interval serine 649 to threonine 747 is disordered. The segment covering cysteine 701–serine 712 has biased composition (polar residues). Positions proline 718–glutamine 734 are enriched in acidic residues.

The protein belongs to the cyclic nucleotide phosphodiesterase family. PDE4 subfamily. Homodimer for the long isoforms. Isoforms with truncated N-termini are monomeric. Binds ARRB2. Interacts with PDE4DIP. Identified in a complex composed of RYR1, PDE4D, PKA, FKBP1A and protein phosphatase 1 (PP1). Interacts (via N-terminal region) with SHANK2 (via proline-rich region); the interaction is increased in a PKA-dependent manner. The cofactor is Zn(2+). Requires Mg(2+) as cofactor. Mn(2+) is required as a cofactor. In terms of processing, sumoylation of long isoforms by PIAS4 augments their activation by PKA phosphorylation and represses their inhibition by ERK phosphorylation. As to expression, expressed in brain (at protein level). Isoform 7 is detected in heart, brain, lung, kidney and testis.

The protein resides in the cytoplasm. It localises to the membrane. The protein localises to the cytoskeleton. It is found in the microtubule organizing center. Its subcellular location is the centrosome. The protein resides in the apical cell membrane. It catalyses the reaction 3',5'-cyclic AMP + H2O = AMP + H(+). The protein operates within purine metabolism; 3',5'-cyclic AMP degradation; AMP from 3',5'-cyclic AMP: step 1/1. Inhibited by rolipram. Activated by phosphatidic acid. In terms of biological role, hydrolyzes the second messenger cAMP, which is a key regulator of many important physiological processes. The sequence is that of 3',5'-cyclic-AMP phosphodiesterase 4D (Pde4d) from Mus musculus (Mouse).